Consider the following 359-residue polypeptide: tRNA-specific 2-thiouridylase MnmA (359 aa).

ATP is bound by residues 6-13 (AMSGGVDS) and L32. The active-site Nucleophile is C101. An intrachain disulfide couples C101 to C193. G125 is an ATP binding site. The segment at 143–145 (KDQ) is interaction with tRNA. Residue C193 is the Cysteine persulfide intermediate of the active site.

The protein belongs to the MnmA/TRMU family.

It localises to the cytoplasm. It catalyses the reaction S-sulfanyl-L-cysteinyl-[protein] + uridine(34) in tRNA + AH2 + ATP = 2-thiouridine(34) in tRNA + L-cysteinyl-[protein] + A + AMP + diphosphate + H(+). Catalyzes the 2-thiolation of uridine at the wobble position (U34) of tRNA, leading to the formation of s(2)U34. The protein is tRNA-specific 2-thiouridylase MnmA of Mycobacterium sp. (strain KMS).